We begin with the raw amino-acid sequence, 181 residues long: Probable cobalt-precorrin-6B C(15)-methyltransferase (decarboxylating) (181 aa).

S-adenosyl-L-methionine contacts are provided by residues Thr-16, 40–44 (GCGSG), Asp-61, and Ala-89.

The protein belongs to the methyltransferase superfamily. Archaeal-type CbiT family.

The catalysed reaction is Co-precorrin-6B + S-adenosyl-L-methionine = Co-precorrin-7 + S-adenosyl-L-homocysteine + CO2. Its pathway is cofactor biosynthesis; adenosylcobalamin biosynthesis; cob(II)yrinate a,c-diamide from sirohydrochlorin (anaerobic route): step 8/10. Its function is as follows. Catalyzes the methylation of C-15 in cobalt-precorrin-6B followed by the decarboxylation of C-12 to form cobalt-precorrin-7. The sequence is that of Probable cobalt-precorrin-6B C(15)-methyltransferase (decarboxylating) from Methanococcus maripaludis (strain C7 / ATCC BAA-1331).